Reading from the N-terminus, the 609-residue chain is CTTNBP2 N-terminal-like protein (609 aa).

Positions 1-10 are enriched in polar residues; that stretch reads MEQNSNSSVA. The disordered stretch occupies residues 1–29; that stretch reads MEQNSNSSVADTFAEAPATDADYGTENCS. Coiled-coil stretches lie at residues 182 to 264 and 303 to 370; these read RMVN…QKQI and IAEG…QQLG. Residues 556 to 584 form a disordered region; sequence PPAGARGAPPPIPTKPIVPPKREPSLSRL. Positions 563–574 are enriched in pro residues; the sequence is APPPIPTKPIVP. Position 586 is a phosphoserine (serine 586).

It localises to the cell projection. The protein resides in the lamellipodium. The protein localises to the cytoplasm. Its subcellular location is the cytoskeleton. It is found in the stress fiber. In terms of biological role, regulates lamellipodial actin dynamics in a Cortactin-dependent manner and is therefore likely involved in controlling actin branch density, actin-retrograde flow rates and lamellipodial protrusion. Functions by slowing the dissociation of Cortactin from Arp2/3 nucleated branches thereby increasing branch nucleation and junction stability. Associates with core striatin-interacting phosphatase and kinase (STRIPAK) complex to form CTTNBP2NL-STRIPAK complexes. STRIPAK complexes have critical roles in protein (de)phosphorylation and are regulators of multiple signaling pathways including Hippo, MAPK, nuclear receptor and cytoskeleton remodeling. Different types of STRIPAK complexes are involved in a variety of biological processes such as cell growth, differentiation, apoptosis, metabolism and immune regulation. This Drosophila melanogaster (Fruit fly) protein is CTTNBP2 N-terminal-like protein.